Reading from the N-terminus, the 201-residue chain is ATP synthase subunit delta, chloroplastic (201 aa).

This sequence belongs to the ATPase delta chain family. In terms of assembly, F-type ATPases have 2 components, F(1) - the catalytic core - and F(0) - the membrane proton channel. F(1) has five subunits: alpha(3), beta(3), gamma(1), delta(1), epsilon(1). CF(0) has four main subunits: a(1), b(1), b'(1) and c(10-14). The alpha and beta chains form an alternating ring which encloses part of the gamma chain. F(1) is attached to F(0) by a central stalk formed by the gamma and epsilon chains, while a peripheral stalk is formed by the delta, b and b' chains.

The protein localises to the plastid. The protein resides in the chloroplast thylakoid membrane. In terms of biological role, f(1)F(0) ATP synthase produces ATP from ADP in the presence of a proton or sodium gradient. F-type ATPases consist of two structural domains, F(1) containing the extramembraneous catalytic core and F(0) containing the membrane proton channel, linked together by a central stalk and a peripheral stalk. During catalysis, ATP synthesis in the catalytic domain of F(1) is coupled via a rotary mechanism of the central stalk subunits to proton translocation. This protein is part of the stalk that links CF(0) to CF(1). It either transmits conformational changes from CF(0) to CF(1) or is implicated in proton conduction. This Vaucheria litorea (Yellow-green alga) protein is ATP synthase subunit delta, chloroplastic.